Reading from the N-terminus, the 191-residue chain is Molybdenum cofactor guanylyltransferase (191 aa).

Residues 13–15 (LAG), lysine 26, aspartate 72, and aspartate 102 each bind GTP. Aspartate 102 serves as a coordination point for Mg(2+).

Belongs to the MobA family. In terms of assembly, monomer. Requires Mg(2+) as cofactor.

The protein localises to the cytoplasm. The enzyme catalyses Mo-molybdopterin + GTP + H(+) = Mo-molybdopterin guanine dinucleotide + diphosphate. Functionally, transfers a GMP moiety from GTP to Mo-molybdopterin (Mo-MPT) cofactor (Moco or molybdenum cofactor) to form Mo-molybdopterin guanine dinucleotide (Mo-MGD) cofactor. This chain is Molybdenum cofactor guanylyltransferase, found in Pseudomonas entomophila (strain L48).